Reading from the N-terminus, the 226-residue chain is Lysosomal-associated transmembrane protein 4B (226 aa).

4 helical membrane-spanning segments follow: residues 26-46 (ILLG…LLSA), 72-92 (MCIA…ATYG), 100-120 (WIIP…LVAV), and 153-173 (CLVL…GYLI). The tract at residues 205-221 (PPYDDATVNSATKEPPP) is required for NEDD4 interaction.

This sequence belongs to the LAPTM4/LAPTM5 transporter family. Homooligomer; upon reaching the lysosomes. Interacts with MCOLN1. Interacts with NEDD4; may play a role in the lysosomal sorting of LAPTM4B; enhances HGS association with NEDD4; mediates inhibition of EGFR degradation. Interacts with PIP5K1C; promotes SNX5 association with LAPTM4B; kinase activity of PIP5K1C is required; interaction is regulated by phosphatidylinositol 4,5-bisphosphate generated by PIP5K1C. Interacts with HGS; promotes HGS ubiquitination. Interacts with SNX5. Interacts with SLC3A2 and SLC7A5; recruits SLC3A2 and SLC7A5 to lysosomes to promote leucine uptake into these organelles and is required for mTORC1 activation. Interacts with LRRC32; decreases TGFB1 production in regulatory T cells. Interacts with BECN1; competes with EGFR for LAPTM4B binding; regulates EGFR activity. Interacts with EGFR; positively correlates with EGFR activation. In terms of processing, undergoes proteolytic cleavage following delivery to the lysosomes. Ubiquitinated by NEDD4. Strongly expressed in fetal ovary, testis, adrenal gland, liver and uterus, and weakly expressed in the spleen.

Its subcellular location is the endomembrane system. It is found in the late endosome membrane. The protein localises to the cell membrane. The protein resides in the cell projection. It localises to the lysosome membrane. Its subcellular location is the endosome membrane. It is found in the endosome. The protein localises to the multivesicular body membrane. The protein resides in the multivesicular body lumen. Functionally, required for optimal lysosomal function. Blocks EGF-stimulated EGFR intraluminal sorting and degradation. Conversely by binding with the phosphatidylinositol 4,5-bisphosphate, regulates its PIP5K1C interaction, inhibits HGS ubiquitination and relieves LAPTM4B inhibition of EGFR degradation. Recruits SLC3A2 and SLC7A5 (the Leu transporter) to the lysosome, promoting entry of leucine and other essential amino acid (EAA) into the lysosome, stimulating activation of proton-transporting vacuolar (V)-ATPase protein pump (V-ATPase) and hence mTORC1 activation. Plays a role as negative regulator of TGFB1 production in regulatory T cells. Binds ceramide and facilitates its exit from late endosome in order to control cell death pathways. This chain is Lysosomal-associated transmembrane protein 4B, found in Bos taurus (Bovine).